A 468-amino-acid polypeptide reads, in one-letter code: Mannan endo-1,4-beta-mannosidase 3 (468 aa).

Positions methionine 1 to alanine 23 are cleaved as a signal peptide. Tryptophan 86 serves as a coordination point for substrate. Asparagine 152 carries N-linked (GlcNAc...) asparagine glycosylation. Asparagine 201 is a substrate binding site. Glutamate 202 acts as the Proton donor in catalysis. Tyrosine 281 provides a ligand contact to substrate. Residue asparagine 300 is glycosylated (N-linked (GlcNAc...) asparagine). Glutamate 321 acts as the Nucleophile in catalysis. N-linked (GlcNAc...) asparagine glycosylation occurs at asparagine 333. Residues tryptophan 364 and aspartate 371 each contribute to the substrate site. The segment at leucine 415–aspartate 436 is disordered. Positions arginine 416 to arginine 430 are enriched in basic residues.

Belongs to the glycosyl hydrolase 5 (cellulase A) family. Expressed in seeds.

The protein localises to the secreted. The catalysed reaction is Random hydrolysis of (1-&gt;4)-beta-D-mannosidic linkages in mannans, galactomannans and glucomannans.. The chain is Mannan endo-1,4-beta-mannosidase 3 (MAN3) from Oryza sativa subsp. japonica (Rice).